Reading from the N-terminus, the 736-residue chain is Factor of DNA methylation 4 (736 aa).

Basic and acidic residues-rich tracts occupy residues 80–90 and 144–167; these read RKYLRPRERPR and DSGR…SNED. Positions 80–167 are disordered; it reads RKYLRPRERP…KPDPFFSNED (88 aa). Residues 360-597 are a coiled coil; it reads TLVSNLENTL…RSMRELTTRA (238 aa).

In terms of biological role, acts in association with FDM3 and FDM5 for RNA-directed DNA methylation (RdDM). This Arabidopsis thaliana (Mouse-ear cress) protein is Factor of DNA methylation 4.